A 348-amino-acid polypeptide reads, in one-letter code: Protein RecA (348 aa).

Residue 69-76 (GPESSGKT) coordinates ATP.

This sequence belongs to the RecA family.

The protein resides in the cytoplasm. Functionally, can catalyze the hydrolysis of ATP in the presence of single-stranded DNA, the ATP-dependent uptake of single-stranded DNA by duplex DNA, and the ATP-dependent hybridization of homologous single-stranded DNAs. It interacts with LexA causing its activation and leading to its autocatalytic cleavage. The sequence is that of Protein RecA from Gluconacetobacter polyoxogenes (Acetobacter polyoxogenes).